The sequence spans 50 residues: Mast cell degranulating peptide (50 aa).

Residues 1–27 (MISMLRCTFFFVSVILITSYFVTPTMS) form the signal peptide. Lys29 carries the post-translational modification N6-formyllysine. The cysteines at positions 30 and 42 are disulfide-linked. N6-formyllysine is present on residues Lys44 and Lys48. An Asparagine amide modification is found at Asn49.

Expressed by the venom gland.

Its subcellular location is the secreted. In terms of biological role, potent anti-inflammatory agent. At low concentrations, mediates the degranulation of mast cells thus evoking an inflammatory response. Also acts as a neurotoxin capable of blocking a class of voltage-gated potassium channels. The sequence is that of Mast cell degranulating peptide from Apis cerana cerana (Oriental honeybee).